Consider the following 346-residue polypeptide: 4-hydroxy-2-oxovalerate aldolase (346 aa).

Residues 8-260 (VTVHDMTLRD…ETGVDVFKIQ (253 aa)) form the Pyruvate carboxyltransferase domain. Position 16–17 (16–17 (RD)) interacts with substrate. D17 serves as a coordination point for Mn(2+). Catalysis depends on H20, which acts as the Proton acceptor. Residues S170 and H199 each coordinate substrate. The Mn(2+) site is built by H199 and H201. Y290 contacts substrate.

This sequence belongs to the 4-hydroxy-2-oxovalerate aldolase family.

The catalysed reaction is (S)-4-hydroxy-2-oxopentanoate = acetaldehyde + pyruvate. This Polaromonas naphthalenivorans (strain CJ2) protein is 4-hydroxy-2-oxovalerate aldolase.